A 24-amino-acid polypeptide reads, in one-letter code: U1-poneritoxin-Na1a (24 aa).

Belongs to the non-disulfide-bridged peptide (NDBP) superfamily. Medium-length antimicrobial peptide (group 3) family. Ponericin-W subfamily. As to expression, expressed by the venom gland.

It is found in the secreted. Its subcellular location is the target cell membrane. Has a broad spectrum of activity against both Gram-positive and Gram-negative bacteria and S.cerevisiae. Has insecticidal and hemolytic activities. May act by disrupting the integrity of the bacterial cell membrane. The polypeptide is U1-poneritoxin-Na1a (Neoponera apicalis (Ant)).